Consider the following 433-residue polypeptide: GTPase Obg (433 aa).

An Obg domain is found at 1-158; it reads MFVDQVKIYV…RNVILELKLL (158 aa). In terms of domain architecture, OBG-type G spans 159-329; that stretch reads ADVGLVGFPS…LLFAIADLLE (171 aa). GTP contacts are provided by residues 165–172, 190–194, 212–215, 282–285, and 310–312; these read GFPSVGKS, FTTLV, DLPG, NKMD, and SAA. Positions 172 and 192 each coordinate Mg(2+). In terms of domain architecture, OCT spans 350–428; that stretch reads KYEKEELPFT…LLDYEFEFVD (79 aa).

It belongs to the TRAFAC class OBG-HflX-like GTPase superfamily. OBG GTPase family. In terms of assembly, monomer. The cofactor is Mg(2+).

The protein localises to the cytoplasm. In terms of biological role, an essential GTPase which binds GTP, GDP and possibly (p)ppGpp with moderate affinity, with high nucleotide exchange rates and a fairly low GTP hydrolysis rate. Plays a role in control of the cell cycle, stress response, ribosome biogenesis and in those bacteria that undergo differentiation, in morphogenesis control. The sequence is that of GTPase Obg from Geobacillus thermodenitrificans (strain NG80-2).